A 334-amino-acid polypeptide reads, in one-letter code: Dual specificity mitogen-activated protein kinase kinase 6 (334 aa).

A compositionally biased stretch (basic residues) spans 1–11; sequence MSQSKGKKRNP. The segment at 1–34 is disordered; sequence MSQSKGKKRNPGLKIPKEAFEQPQTSSTPPRDLD. The segment at 4 to 19 is d domain; sequence SKGKKRNPGLKIPKEA. In terms of domain architecture, Protein kinase spans 53–314; it reads LEPIVELGRG…YPELMQHPFF (262 aa). ATP contacts are provided by residues 59–67 and lysine 82; that span reads LGRGAYGVV. Residue aspartate 179 is the Proton acceptor of the active site. Serine 207 is modified (phosphoserine; by MAPK3). Phosphothreonine; by MAPK3 is present on threonine 211. Residues 311-334 form a DVD domain region; sequence HPFFTVHESKAADVASFVKLILGD.

Belongs to the protein kinase superfamily. STE Ser/Thr protein kinase family. MAP kinase kinase subfamily. As to quaternary structure, dimer. Interacts (via its D domain) with its substrates MAPK11, MAPK12, MAPK13 and MAPK14. Interacts (via its DVD domain) with MAP3Ks activators like MAP3K5/ASK1, MAP3K1/MEKK1, MAP3K2/MEKK2, MAP3K3/MEKK3, MAP3K4/MEKK4, MAP3K7/TAK1, MAP3K11/MLK3 and MAP3K17/TAOK2. Interacts with DCTN1. Interacts with EIF2AK2/PKR. Post-translationally, weakly autophosphorylated. Phosphorylated at Ser-207 and Thr-211 by the majority of M3Ks, such as MAP3K5/ASK1, MAP3K1/MEKK1, MAP3K2/MEKK2, MAP3K3/MEKK3, MAP3K4/MEKK4, MAP3K7/TAK1, MAP3K11/MLK3 and MAP3K17/TAOK2. In terms of processing, in response to genotoxic stress, MAP3K-phosphorylated MAP2K6 is ubiquitinated and degraded by the SCF(FBXO31) complex.

The protein localises to the nucleus. The protein resides in the cytoplasm. Its subcellular location is the cytoskeleton. It carries out the reaction L-seryl-[protein] + ATP = O-phospho-L-seryl-[protein] + ADP + H(+). The enzyme catalyses L-threonyl-[protein] + ATP = O-phospho-L-threonyl-[protein] + ADP + H(+). The catalysed reaction is L-tyrosyl-[protein] + ATP = O-phospho-L-tyrosyl-[protein] + ADP + H(+). With respect to regulation, activated by dual phosphorylation on Ser-207 and Thr-211 in response to a variety of cellular stresses, including UV radiation, osmotic shock, hypoxia, inflammatory cytokines, interferon gamma (IFNG), and less often by growth factors. MAP2K6/MKK6 is activated by the majority of M3Ks, such as MAP3K5/ASK1, MAP3K1/MEKK1, MAP3K2/MEKK2, MAP3K3/MEKK3, MAP3K4/MEKK4, MAP3K7/TAK1, MAP3K11/MLK3 and MAP3K17/TAOK2. In terms of biological role, dual specificity protein kinase which acts as an essential component of the MAP kinase signal transduction pathway. With MAP3K3/MKK3, catalyzes the concomitant phosphorylation of a threonine and a tyrosine residue in the MAP kinases p38 MAPK11, MAPK12, MAPK13 and MAPK14 and plays an important role in the regulation of cellular responses to cytokines and all kinds of stresses. Especially, MAP2K3/MKK3 and MAP2K6/MKK6 are both essential for the activation of MAPK11 and MAPK13 induced by environmental stress, whereas MAP2K6/MKK6 is the major MAPK11 activator in response to TNF. MAP2K6/MKK6 also phosphorylates and activates PAK6. The p38 MAP kinase signal transduction pathway leads to direct activation of transcription factors. Nuclear targets of p38 MAP kinase include the transcription factors ATF2 and ELK1. Within the p38 MAPK signal transduction pathway, MAP3K6/MKK6 mediates phosphorylation of STAT4 through MAPK14 activation, and is therefore required for STAT4 activation and STAT4-regulated gene expression in response to IL-12 stimulation. The pathway is also crucial for IL-6-induced SOCS3 expression and down-regulation of IL-6-mediated gene induction; and for IFNG-dependent gene transcription. Has a role in osteoclast differentiation through NF-kappa-B transactivation by TNFSF11, and in endochondral ossification and since SOX9 is another likely downstream target of the p38 MAPK pathway. MAP2K6/MKK6 mediates apoptotic cell death in thymocytes. Acts also as a regulator for melanocytes dendricity, through the modulation of Rho family GTPases. This is Dual specificity mitogen-activated protein kinase kinase 6 (Map2k6) from Mus musculus (Mouse).